A 259-amino-acid chain; its full sequence is ATP synthase subunit a (259 aa).

6 helical membrane-spanning segments follow: residues 37 to 57 (LSITNSTIWMWLAVAVAFLFM), 101 to 121 (YFPAIFTLFLLVLFCNLLGLI), 131 to 151 (LVVTATLALSVFFFATGLAIV), 157 to 177 (FIGFFVPSGVPPMLLILMVPI), 203 to 223 (VLAIMFFFAATLPLGGLLMPA), and 232 to 252 (FELFIGFIQAYIFTILTCVYI).

Belongs to the ATPase A chain family. As to quaternary structure, F-type ATPases have 2 components, CF(1) - the catalytic core - and CF(0) - the membrane proton channel. CF(1) has five subunits: alpha(3), beta(3), gamma(1), delta(1), epsilon(1). CF(0) has three main subunits: a(1), b(2) and c(9-12). The alpha and beta chains form an alternating ring which encloses part of the gamma chain. CF(1) is attached to CF(0) by a central stalk formed by the gamma and epsilon chains, while a peripheral stalk is formed by the delta and b chains.

It is found in the cell inner membrane. Its function is as follows. Key component of the proton channel; it plays a direct role in the translocation of protons across the membrane. The sequence is that of ATP synthase subunit a from Magnetococcus marinus (strain ATCC BAA-1437 / JCM 17883 / MC-1).